Here is a 261-residue protein sequence, read N- to C-terminus: Beta cell expansion factor A (261 aa).

Positions 1–21 are cleaved as a signal peptide; the sequence is MNKRNWLLALSLSLAFSPCYA. Residues 99–261 form an SYLF domain region; that stretch reads KTAKEARIAI…IDKDLTETSR (163 aa).

Its subcellular location is the secreted. It is found in the host. Stimulates the proliferation of insulin-producing beta cells during development in gnotobiotic zebrafish and mice. BefA is a microbiome-derived protein that traffics from the host intestinal lumen to the pancreas to act directly on pancreatic islets. In pancreas, interacts directly with host beta cells and elicits their proliferation via a mechanism of increasing membrane permeabilization. Can also permeabilize bacterial cell membranes, but does not show killing of target bacteria. This chain is Beta cell expansion factor A, found in Aeromonas veronii.